Here is a 677-residue protein sequence, read N- to C-terminus: Zinc finger protein 526 (677 aa).

3 C2H2-type zinc fingers span residues F57–H79, F109–H131, and Y141–H164. A disordered region spans residues T167 to P190. The span at P172–P190 shows a compositional bias: pro residues. The C2H2-type 4 zinc-finger motif lies at Y198 to H220. Residues S223–L232 are compositionally biased toward basic and acidic residues. Residues S223 to A300 form a disordered region. Acidic residues predominate over residues E233–G257. C2H2-type zinc fingers lie at residues F304 to H326, H331 to H353, Y359 to H381, and H387 to H408. Positions H408 to L449 are disordered. Over residues G410–A433 the composition is skewed to low complexity. Residues E434–L449 show a composition bias toward pro residues. 5 consecutive C2H2-type zinc fingers follow at residues L449–H472, H479–H501, F507–H529, Y535–H557, and Y580–H602. A disordered region spans residues L608–Q627. Residues P613 to P626 show a composition bias toward pro residues.

Belongs to the krueppel C2H2-type zinc-finger protein family.

Its subcellular location is the nucleus. Functionally, may be involved in transcriptional regulation. In Bos taurus (Bovine), this protein is Zinc finger protein 526 (ZNF526).